The primary structure comprises 94 residues: Small ribosomal subunit protein uS19 (94 aa).

Belongs to the universal ribosomal protein uS19 family.

Its function is as follows. Protein S19 forms a complex with S13 that binds strongly to the 16S ribosomal RNA. This chain is Small ribosomal subunit protein uS19, found in Clostridium botulinum (strain Langeland / NCTC 10281 / Type F).